Reading from the N-terminus, the 467-residue chain is Serine/threonine-protein kinase SSN3 (467 aa).

Polar residues-rich tracts occupy residues 1 to 12 (MSFSNLPPSSGR) and 29 to 39 (GSSSFTANNPS). A disordered region spans residues 1 to 45 (MSFSNLPPSSGRGSHADGASGRSMPPFPGSSSFTANNPSKGIHPN). The 330-residue stretch at 79–408 (YLIVGFISSG…AKEALNHPYF (330 aa)) folds into the Protein kinase domain. ATP is bound by residues 85 to 93 (ISSGTYGRV) and Lys109. Asp211 functions as the Proton acceptor in the catalytic mechanism. Residues 426 to 467 (YPNRRVSQDDNDIRSGSLPGTKRSGLPDDTLTSRAAKRAREM) are disordered.

Belongs to the protein kinase superfamily. CMGC Ser/Thr protein kinase family. CDC2/CDKX subfamily. As to quaternary structure, component of the SRB8-11 complex, a regulatory module of the Mediator complex. Mg(2+) is required as a cofactor.

It is found in the nucleus. The enzyme catalyses L-seryl-[protein] + ATP = O-phospho-L-seryl-[protein] + ADP + H(+). The catalysed reaction is L-threonyl-[protein] + ATP = O-phospho-L-threonyl-[protein] + ADP + H(+). It catalyses the reaction [DNA-directed RNA polymerase] + ATP = phospho-[DNA-directed RNA polymerase] + ADP + H(+). Its function is as follows. Component of the SRB8-11 complex. The SRB8-11 complex is a regulatory module of the Mediator complex which is itself involved in regulation of basal and activated RNA polymerase II-dependent transcription. The SRB8-11 complex may be involved in the transcriptional repression of a subset of genes regulated by Mediator. It may inhibit the association of the Mediator complex with RNA polymerase II to form the holoenzyme complex. The SRB8-11 complex phosphorylates the C-terminal domain (CTD) of the largest subunit of RNA polymerase II. The protein is Serine/threonine-protein kinase SSN3 (SSN3) of Coccidioides immitis (strain RS) (Valley fever fungus).